The chain runs to 466 residues: MTVRTRFAPSPTGLLHIGNARAALFNFLYARHHGGKFLLRIEDTDRERSTQQAVDVLFDGLAWMGITPDEEPVFQSTRQARHAEIAHHLLAQGLAYRCYCTPEELQQMRDQAAAEGRPPRYNGYWRDRDPSEAPAGAPYTVRIRAPREGETVIHDLVQGDVRVANAELDDMIILRGDGTPVYQLAVVVDDHDMDITHVIRGDDHLTNTFRQAMIYRAMGWDLPAFAHLPLIHGPDGAKLSKRHGAQSVVEFREMGYLPEALNNYLLRLGWGHGDAEILSRDEQIQLFDLDGVGRSASRMDYVKLQHLNGVWLRQADDARLTDDIVARLADRPDVSVDEAVRARILALMPGLKERAKTLVDLADSAAFLGRHVPLAFDAKAEKLLTPEARAMLGELARDLAVIEPFDAPAIDVALRRFAEHHGHKLGQVAQPLRAAMTGGATSPGIDATLAALGRDEVMARIGAVAR.

Positions 9–19 (PSPTGLLHIGN) match the 'HIGH' region motif. The 'KMSKS' region motif lies at 238–242 (KLSKR). Lys241 contributes to the ATP binding site.

The protein belongs to the class-I aminoacyl-tRNA synthetase family. Glutamate--tRNA ligase type 1 subfamily. Monomer.

The protein localises to the cytoplasm. The enzyme catalyses tRNA(Glu) + L-glutamate + ATP = L-glutamyl-tRNA(Glu) + AMP + diphosphate. Catalyzes the attachment of glutamate to tRNA(Glu) in a two-step reaction: glutamate is first activated by ATP to form Glu-AMP and then transferred to the acceptor end of tRNA(Glu). The sequence is that of Glutamate--tRNA ligase 1 from Gluconacetobacter diazotrophicus (strain ATCC 49037 / DSM 5601 / CCUG 37298 / CIP 103539 / LMG 7603 / PAl5).